Reading from the N-terminus, the 296-residue chain is MGTIVLKMTAEQISVLQKDLASYATATKNPYAFFSAKVDGTSVIAYTSGKVTFQGAKPEILASRFGYQAEPKQSPDGQNLALIGSDEVGNGSYFGGLAVVASLVTPADHAFLKSLGVDDSKNLNDSKIRQIAPLLEEKIPHKALLLSPRKYNEVVGDGKAHNAVSVKVALHNQAIFLLLQSGAKPDKIVIDAFISEKNYQKYLKNERNHFEFPITLEEKAEGKYLAVAVSSIIARNLFLKNLDKLSQEVGYTLPSGAGAKSDQVAAKLLQAYGDQALQTTAKYHFANTKKAYQRLK.

The RNase H type-2 domain occupies 80–296 (LALIGSDEVG…NTKKAYQRLK (217 aa)). The a divalent metal cation site is built by D86, E87, and D191.

Belongs to the RNase HII family. RnhC subfamily. Requires Mn(2+) as cofactor. Mg(2+) serves as cofactor.

The protein resides in the cytoplasm. It carries out the reaction Endonucleolytic cleavage to 5'-phosphomonoester.. Endonuclease that specifically degrades the RNA of RNA-DNA hybrids. The polypeptide is Ribonuclease HIII (Streptococcus thermophilus (strain CNRZ 1066)).